The chain runs to 425 residues: Riboflavin biosynthesis protein RibBA (425 aa).

Residues 1 to 204 (MTRLDSVERA…IADLIEWRRK (204 aa)) are DHBP synthase. D-ribulose 5-phosphate-binding positions include 28 to 29 (RE), Asp-33, 141 to 145 (RPGHT), and Glu-165. Glu-29 is a binding site for Mg(2+). His-144 contributes to the Mg(2+) binding site. The segment at 205 to 425 (HEKHIERVAE…HLPGEFGGAL (221 aa)) is GTP cyclohydrolase II. 259–263 (RVHSE) is a GTP binding site. Zn(2+)-binding residues include Cys-264, Cys-275, and Cys-277. Residues Gln-280, 303–305 (EGR), and Thr-325 each bind GTP. Asp-337 (proton acceptor; for GTP cyclohydrolase activity) is an active-site residue. The active-site Nucleophile; for GTP cyclohydrolase activity is Arg-339. Residues Thr-360 and Lys-365 each contribute to the GTP site.

This sequence in the N-terminal section; belongs to the DHBP synthase family. It in the C-terminal section; belongs to the GTP cyclohydrolase II family. Mg(2+) is required as a cofactor. Mn(2+) serves as cofactor. Requires Zn(2+) as cofactor.

The catalysed reaction is D-ribulose 5-phosphate = (2S)-2-hydroxy-3-oxobutyl phosphate + formate + H(+). The enzyme catalyses GTP + 4 H2O = 2,5-diamino-6-hydroxy-4-(5-phosphoribosylamino)-pyrimidine + formate + 2 phosphate + 3 H(+). It functions in the pathway cofactor biosynthesis; riboflavin biosynthesis; 2-hydroxy-3-oxobutyl phosphate from D-ribulose 5-phosphate: step 1/1. The protein operates within cofactor biosynthesis; riboflavin biosynthesis; 5-amino-6-(D-ribitylamino)uracil from GTP: step 1/4. Its function is as follows. Catalyzes the conversion of D-ribulose 5-phosphate to formate and 3,4-dihydroxy-2-butanone 4-phosphate. In terms of biological role, catalyzes the conversion of GTP to 2,5-diamino-6-ribosylamino-4(3H)-pyrimidinone 5'-phosphate (DARP), formate and pyrophosphate. In Mycobacterium marinum (strain ATCC BAA-535 / M), this protein is Riboflavin biosynthesis protein RibBA.